A 628-amino-acid polypeptide reads, in one-letter code: UvrABC system protein C (628 aa).

A GIY-YIG domain is found at 21 to 100 (TGPGIYQFKN…IKELKPRYNV (80 aa)). One can recognise a UVR domain in the interval 214 to 249 (AGLLKELHEKMLTAAAELRFEEAAELKMQLQSLRRY).

Belongs to the UvrC family. In terms of assembly, interacts with UvrB in an incision complex.

The protein localises to the cytoplasm. Functionally, the UvrABC repair system catalyzes the recognition and processing of DNA lesions. UvrC both incises the 5' and 3' sides of the lesion. The N-terminal half is responsible for the 3' incision and the C-terminal half is responsible for the 5' incision. This is UvrABC system protein C from Chlorobium luteolum (strain DSM 273 / BCRC 81028 / 2530) (Pelodictyon luteolum).